Consider the following 280-residue polypeptide: Acetyl-coenzyme A carboxylase carboxyl transferase subunit beta (280 aa).

Residues 26 to 280 enclose the CoA carboxyltransferase N-terminal domain; sequence LWQKCPRCGE…TKLLAWHSQK (255 aa). Zn(2+) contacts are provided by Cys-30, Cys-33, Cys-49, and Cys-52. A C4-type zinc finger spans residues 30-52; the sequence is CPRCGEIIFNKELEKNFKVCPKC.

This sequence belongs to the AccD/PCCB family. Acetyl-CoA carboxylase is a heterohexamer composed of biotin carboxyl carrier protein (AccB), biotin carboxylase (AccC) and two subunits each of ACCase subunit alpha (AccA) and ACCase subunit beta (AccD). Zn(2+) is required as a cofactor.

It is found in the cytoplasm. The catalysed reaction is N(6)-carboxybiotinyl-L-lysyl-[protein] + acetyl-CoA = N(6)-biotinyl-L-lysyl-[protein] + malonyl-CoA. It functions in the pathway lipid metabolism; malonyl-CoA biosynthesis; malonyl-CoA from acetyl-CoA: step 1/1. Functionally, component of the acetyl coenzyme A carboxylase (ACC) complex. Biotin carboxylase (BC) catalyzes the carboxylation of biotin on its carrier protein (BCCP) and then the CO(2) group is transferred by the transcarboxylase to acetyl-CoA to form malonyl-CoA. The sequence is that of Acetyl-coenzyme A carboxylase carboxyl transferase subunit beta from Carboxydothermus hydrogenoformans (strain ATCC BAA-161 / DSM 6008 / Z-2901).